The following is a 373-amino-acid chain: 3 beta-hydroxysteroid dehydrogenase/Delta 5--&gt;4-isomerase type 2 (373 aa).

Tyrosine 155 functions as the Proton acceptor in the catalytic mechanism. NAD(+) is bound at residue lysine 159. The chain crosses the membrane as a helical span at residues 288-308; it reads VALLYWLGFLLELVNFLLRPV.

It belongs to the 3-beta-HSD family. High levels in adrenal gland, kidney and male liver. Low levels in female liver.

The protein resides in the endoplasmic reticulum membrane. It localises to the mitochondrion membrane. It catalyses the reaction a 3beta-hydroxy-Delta(5)-steroid + NAD(+) = a 3-oxo-Delta(5)-steroid + NADH + H(+). The enzyme catalyses a 3-oxo-Delta(5)-steroid = a 3-oxo-Delta(4)-steroid. It carries out the reaction pregnenolone + NAD(+) = pregn-5-ene-3,20-dione + NADH + H(+). The catalysed reaction is pregn-5-ene-3,20-dione = progesterone. It catalyses the reaction 3beta-hydroxyandrost-5-en-17-one + NAD(+) = androst-5-ene-3,17-dione + NADH + H(+). The enzyme catalyses androst-5-ene-3,17-dione = androst-4-ene-3,17-dione. It functions in the pathway lipid metabolism; steroid biosynthesis. Functionally, 3-beta-HSD is a bifunctional enzyme, that catalyzes the oxidative conversion of Delta(5)-ene-3-beta-hydroxy steroid, and the oxidative conversion of ketosteroids. The 3-beta-HSD enzymatic system plays a crucial role in the biosynthesis of all classes of hormonal steroids. The sequence is that of 3 beta-hydroxysteroid dehydrogenase/Delta 5--&gt;4-isomerase type 2 (HSD3B2) from Mesocricetus auratus (Golden hamster).